The following is a 52-amino-acid chain: Large ribosomal subunit protein eL39 (52 aa).

The protein belongs to the eukaryotic ribosomal protein eL39 family.

The chain is Large ribosomal subunit protein eL39 from Desulfurococcus amylolyticus (strain DSM 18924 / JCM 16383 / VKM B-2413 / 1221n) (Desulfurococcus kamchatkensis).